Consider the following 134-residue polypeptide: Photosystem II lipoprotein Psb27 (134 aa).

The signal sequence occupies residues 1 to 24 (MSFLKNQLSRLLALILVVAIGLTA). The N-palmitoyl cysteine moiety is linked to residue C25. A lipid anchor (S-diacylglycerol cysteine) is attached at C25.

It belongs to the Psb27 family. In terms of assembly, monomer. Forms a complex with a monomeric, partially assembled PSII. This is probably the complex in which D1 is assembled and/or replaced. Present in 6-10% of PSII complexes; mostly in monomeric PSII. These PSII do not evolve oxygen, do not have an assembled calcium-manganese-oxide cluster. Psb27-containing PSII seem to be assembly intermediates; a wild-type strain includes the intrinsic membrane proteins, Psb27, Pbs28, substoichiometric amounts of PsbO and PsbQ but no PsbU or PsbV, while a ctpA deletion mutant includes the intrinsic membrane proteins (D1 as precursor), Psb27, a very low amount of PsbO and PsbQ, but no PsbU or PsbV. Small amounts of Psb27 interact with the lumenal domain of CP43 (psbC) in wild-type and a ctpA mutant. A small amount can also be detected in monomeric and trimeric photosystem I (PSI), possibly via association with PsaB.

Its subcellular location is the cellular thylakoid membrane. Its function is as follows. Plays a role in the repair and/or biogenesis of the calcium-manganese-oxide cluster on the lumenal face of the thylakoid membrane. Photosystem II (PSII) complexes containing this protein are monomeric, are assembly intermediates lacking the calcium-manganese-oxide cluster and miss some of the lumenal subunits. Probably blocks binding of some of the small lumenal subunits. The chain is Photosystem II lipoprotein Psb27 from Synechocystis sp. (strain ATCC 27184 / PCC 6803 / Kazusa).